The chain runs to 444 residues: Trigger factor (444 aa).

A PPIase FKBP-type domain is found at 166 to 251; the sequence is GDQIVIDFKG…VKAVKAPKAA (86 aa).

Belongs to the FKBP-type PPIase family. Tig subfamily.

It localises to the cytoplasm. It carries out the reaction [protein]-peptidylproline (omega=180) = [protein]-peptidylproline (omega=0). Functionally, involved in protein export. Acts as a chaperone by maintaining the newly synthesized protein in an open conformation. Functions as a peptidyl-prolyl cis-trans isomerase. This chain is Trigger factor, found in Paracoccus denitrificans (strain Pd 1222).